The primary structure comprises 492 residues: ATP synthase subunit beta, chloroplastic (492 aa).

ATP is bound at residue Gly170–Thr177.

Belongs to the ATPase alpha/beta chains family. F-type ATPases have 2 components, CF(1) - the catalytic core - and CF(0) - the membrane proton channel. CF(1) has five subunits: alpha(3), beta(3), gamma(1), delta(1), epsilon(1). CF(0) has four main subunits: a(1), b(1), b'(1) and c(9-12).

Its subcellular location is the plastid. It is found in the chloroplast thylakoid membrane. It catalyses the reaction ATP + H2O + 4 H(+)(in) = ADP + phosphate + 5 H(+)(out). In terms of biological role, produces ATP from ADP in the presence of a proton gradient across the membrane. The catalytic sites are hosted primarily by the beta subunits. The sequence is that of ATP synthase subunit beta, chloroplastic from Marchantia polymorpha (Common liverwort).